The chain runs to 140 residues: Chromatin accessibility complex 16kD protein (140 aa).

Residues Leu-111 to Glu-140 form a disordered region. Residues Ser-117–Glu-140 are compositionally biased toward acidic residues.

As to quaternary structure, component of the chromatin accessibility complex (CHRAC), composed of Chrac-14, Chrac-16, Acf and Iswi. Forms a heterodimer with Chrac-14. The Chrac-14/Chrac-16 heterodimer interacts with Acf (via N-terminus). Stabilizes the interaction between Chrac-14 and Iswi.

It is found in the nucleus. Functionally, histone-like protein which promotes nucleosome sliding of ATP-dependent nucleosome remodeling complexes. Part of the chromatin-accessibility complex (CHRAC) which uses energy/ATP to increase the general accessibility of DNA in chromatin. As a heterodimer with Chrac-14, binds DNA and facilitates nucleosome sliding by Acf. As part of the CHRAC complex, required for oogenesis. The chain is Chromatin accessibility complex 16kD protein from Drosophila melanogaster (Fruit fly).